The primary structure comprises 130 residues: S-adenosylmethionine decarboxylase proenzyme (130 aa).

The Schiff-base intermediate with substrate; via pyruvic acid role is filled by Ser-63. Residue Ser-63 is modified to Pyruvic acid (Ser); by autocatalysis. Catalysis depends on His-68, which acts as the Proton acceptor; for processing activity. Cys-83 acts as the Proton donor; for catalytic activity in catalysis.

The protein belongs to the prokaryotic AdoMetDC family. Type 1 subfamily. Heterotetramer of two alpha and two beta chains arranged as a dimer of alpha/beta heterodimers. Pyruvate is required as a cofactor. Post-translationally, is synthesized initially as an inactive proenzyme. Formation of the active enzyme involves a self-maturation process in which the active site pyruvoyl group is generated from an internal serine residue via an autocatalytic post-translational modification. Two non-identical subunits are generated from the proenzyme in this reaction, and the pyruvate is formed at the N-terminus of the alpha chain, which is derived from the carboxyl end of the proenzyme. The post-translation cleavage follows an unusual pathway, termed non-hydrolytic serinolysis, in which the side chain hydroxyl group of the serine supplies its oxygen atom to form the C-terminus of the beta chain, while the remainder of the serine residue undergoes an oxidative deamination to produce ammonia and the pyruvoyl group blocking the N-terminus of the alpha chain.

It catalyses the reaction S-adenosyl-L-methionine + H(+) = S-adenosyl 3-(methylsulfanyl)propylamine + CO2. It functions in the pathway amine and polyamine biosynthesis; S-adenosylmethioninamine biosynthesis; S-adenosylmethioninamine from S-adenosyl-L-methionine: step 1/1. In terms of biological role, catalyzes the decarboxylation of S-adenosylmethionine to S-adenosylmethioninamine (dcAdoMet), the propylamine donor required for the synthesis of the polyamines spermine and spermidine from the diamine putrescine. The polypeptide is S-adenosylmethionine decarboxylase proenzyme (speH) (Thermotoga maritima (strain ATCC 43589 / DSM 3109 / JCM 10099 / NBRC 100826 / MSB8)).